The primary structure comprises 778 residues: Lon protease (778 aa).

Positions 4 to 187 (LPVLPLTDAV…LLVGWVRAHL (184 aa)) constitute a Lon N-terminal domain. Residue 346–353 (GPPGVGKT) coordinates ATP. The Lon proteolytic domain occupies 581 to 762 (TAVPGVATGL…ADVLALALRP (182 aa)). Active-site residues include Ser-668 and Lys-711.

The protein belongs to the peptidase S16 family. As to quaternary structure, homohexamer. Organized in a ring with a central cavity.

The protein resides in the cytoplasm. The enzyme catalyses Hydrolysis of proteins in presence of ATP.. In terms of biological role, ATP-dependent serine protease that mediates the selective degradation of mutant and abnormal proteins as well as certain short-lived regulatory proteins. Required for cellular homeostasis and for survival from DNA damage and developmental changes induced by stress. Degrades polypeptides processively to yield small peptide fragments that are 5 to 10 amino acids long. Binds to DNA in a double-stranded, site-specific manner. This is Lon protease from Salinispora arenicola (strain CNS-205).